Reading from the N-terminus, the 403-residue chain is G-protein coupled receptor family C group 5 member B (403 aa).

An N-terminal signal peptide occupies residues 1 to 28 (MFVASERKMRAHQVLTFLLLFVITSVAS). The Extracellular portion of the chain corresponds to 29–56 (ENASTSRGCGLDLLPQYVSLCDLDAIWG). Residue asparagine 30 is glycosylated (N-linked (GlcNAc...) asparagine). A helical membrane pass occupies residues 57-77 (IVVEAVAGAGALITLLLMLIL). Residues 78–94 (LVRLPFIKEKEKKSPVG) lie on the Cytoplasmic side of the membrane. The chain crosses the membrane as a helical span at residues 95-115 (LHFLFLLGTLGLFGLTFAFII). The Extracellular segment spans residues 116-126 (QEDETICSVRR). Residues 127-147 (FLWGVLFALCFSCLLSQAWRV) form a helical membrane-spanning segment. Over 148 to 162 (RRLVRHGTGPAGWQL) the chain is Cytoplasmic. The chain crosses the membrane as a helical span at residues 163–183 (VGLALCLMLVQVIIAVEWLVL). Residues 184–199 (TVLRDTRPACAYEPMD) are Extracellular-facing. Residues 200–220 (FVMALIYDMVLLVVTLGLALF) form a helical membrane-spanning segment. Residues 221-234 (TLCGKFKRWKLNGA) are Cytoplasmic-facing. The helical transmembrane segment at 235–255 (FLLITAFLSVLIWVAWMTMYL) threads the bilayer. Residues 256-271 (FGNVKLQQGDAWNDPT) lie on the Extracellular side of the membrane. Residues 272-292 (LAITLAASGWVFVIFHAIPEI) form a helical membrane-spanning segment. The Cytoplasmic portion of the chain corresponds to 293-403 (HCTLLPALQE…PPSHTGRHLW (111 aa)). A disordered region spans residues 349–371 (GFPNGSLGKRPSGSLGKRPSAPF). Serine 354 is subject to Phosphoserine.

Belongs to the G-protein coupled receptor 3 family. In terms of tissue distribution, expression is high in kidney, pancreas, and testis, medium in brain, heart, prostate, small intestine, and spleen, low in liver, placenta, skeletal muscle, colon, ovary, and thymus, and not detectable in lung and peripheral leukocyte. According to PubMed:10945465, highly expressed in most brain areas examined, with the highest levels observed in corpus callosum, caudate nucleus, putamen, substantia nigra, thalamus, hippocampus, and spinal cord as well as in dorsal root ganglia (DRG). Expressed in glia limitans, ependymal cells, astrocyte cell bodies, the perivascular region in astrocyte endfeet, but not in neurons. In the periphery, expression levels are relatively low, compared to the CNS, with the strongest expression detected in pancreas, testis, uterus, and stomach.

Its subcellular location is the cell membrane. It localises to the cytoplasmic vesicle membrane. Its function is as follows. G-protein coupled receptor involved in the regulation of cell volume. The chain is G-protein coupled receptor family C group 5 member B (GPRC5B) from Homo sapiens (Human).